The sequence spans 284 residues: MSWFEKILPSIKQVTERKKNVPEGLWTKCPKCESTLYRAEVRRNLEVCPKCDHHMRLGGRDRLEAFFDEGTGVEISAEVTPVDALKFKDIKPYKTRIAQAQKATGEKDSFITMTGKIQGLEVVAGAFEFKFMGGSMGSVMGEKFVRAVNEAIERRCPLIVFSASGGARMQEALFSLMQMAKTSAALGHLRANKLPFISVLTDPTMGGVSASFAMLGDLNIAEPKALIGFAGPRVIEQTVREKLPEGFQRSEFLLEHGAIDRIIHRHNLSDELASICRMLLQKSA.

The region spanning 25–284 (LWTKCPKCES…ICRMLLQKSA (260 aa)) is the CoA carboxyltransferase N-terminal domain. Residues C29, C32, C48, and C51 each contribute to the Zn(2+) site. A C4-type zinc finger spans residues 29 to 51 (CPKCESTLYRAEVRRNLEVCPKC).

The protein belongs to the AccD/PCCB family. In terms of assembly, acetyl-CoA carboxylase is a heterohexamer composed of biotin carboxyl carrier protein (AccB), biotin carboxylase (AccC) and two subunits each of ACCase subunit alpha (AccA) and ACCase subunit beta (AccD). Zn(2+) is required as a cofactor.

The protein localises to the cytoplasm. It carries out the reaction N(6)-carboxybiotinyl-L-lysyl-[protein] + acetyl-CoA = N(6)-biotinyl-L-lysyl-[protein] + malonyl-CoA. It functions in the pathway lipid metabolism; malonyl-CoA biosynthesis; malonyl-CoA from acetyl-CoA: step 1/1. Its function is as follows. Component of the acetyl coenzyme A carboxylase (ACC) complex. Biotin carboxylase (BC) catalyzes the carboxylation of biotin on its carrier protein (BCCP) and then the CO(2) group is transferred by the transcarboxylase to acetyl-CoA to form malonyl-CoA. The polypeptide is Acetyl-coenzyme A carboxylase carboxyl transferase subunit beta (Hydrogenovibrio crunogenus (strain DSM 25203 / XCL-2) (Thiomicrospira crunogena)).